The chain runs to 197 residues: MEINTHNAEILLSAANKSHYPQDDIPEIALAGRSNVGKSSFINTMLNRKNLARTSGKPGKTQLLNFFNIDDKLRFVDVPGYGYAKVSKTERAKWGRMIEEYLTSRENLRAVVSLVDLRHEPSADDVQMYEFLKYYEIPVILVATKADKIPRGKWNKHESAIKKKLNFDQADTFILFSSVDKTGLDASWDAILEKVNK.

The EngB-type G domain maps to 24–197; it reads DIPEIALAGR…WDAILEKVNK (174 aa). GTP contacts are provided by residues 32–39, 59–63, 77–80, 144–147, and 176–178; these read GRSNVGKS, GKTQL, DVPG, TKAD, and FSS. Mg(2+)-binding residues include Ser-39 and Thr-61.

The protein belongs to the TRAFAC class TrmE-Era-EngA-EngB-Septin-like GTPase superfamily. EngB GTPase family. It depends on Mg(2+) as a cofactor.

Functionally, necessary for normal cell division and for the maintenance of normal septation. The polypeptide is Probable GTP-binding protein EngB (Streptococcus gordonii (strain Challis / ATCC 35105 / BCRC 15272 / CH1 / DL1 / V288)).